Here is a 155-residue protein sequence, read N- to C-terminus: UPF0178 protein ACIAD2644 (155 aa).

Residues Gly-120–Ala-155 are disordered.

The protein belongs to the UPF0178 family.

The sequence is that of UPF0178 protein ACIAD2644 from Acinetobacter baylyi (strain ATCC 33305 / BD413 / ADP1).